Consider the following 169-residue polypeptide: Gastrula zinc finger protein XlCGF62.1 (169 aa).

6 consecutive C2H2-type zinc fingers follow at residues 6 to 28 (FICT…IRTH), 34 to 56 (FICT…YKTH), 62 to 84 (FICT…HRSH), 90 to 113 (FTCT…QAIH), 119 to 141 (FICT…KRTH), and 147 to 169 (FVCT…KRTH).

Belongs to the krueppel C2H2-type zinc-finger protein family.

It is found in the nucleus. Its function is as follows. May be involved in transcriptional regulation. This chain is Gastrula zinc finger protein XlCGF62.1, found in Xenopus laevis (African clawed frog).